A 420-amino-acid chain; its full sequence is Phospholipase A1-II 3 (420 aa).

The signal sequence occupies residues M1 to A21. N231 is a glycosylation site (N-linked (GlcNAc...) asparagine). S240 functions as the Acyl-ester intermediate in the catalytic mechanism. The active-site Charge relay system is the S240. N-linked (GlcNAc...) asparagine glycosylation is present at N294. Catalysis depends on charge relay system residues D305 and H343. A coiled-coil region spans residues V367 to V388. N-linked (GlcNAc...) asparagine glycosylation occurs at N403.

Belongs to the AB hydrolase superfamily. Lipase family.

The protein resides in the secreted. Acylhydrolase that catalyzes the hydrolysis of phospholipids at the sn-1 position. This is Phospholipase A1-II 3 from Oryza sativa subsp. japonica (Rice).